The chain runs to 396 residues: S-adenosylmethionine synthase (396 aa).

His-16 lines the ATP pocket. Residue Asp-18 participates in Mg(2+) binding. A K(+)-binding site is contributed by Glu-44. 2 residues coordinate L-methionine: Glu-57 and Gln-100. Positions Gln-100–Arg-110 are flexible loop. Residues Asp-165–Lys-167, Asp-240, Arg-246–Lys-247, Ala-263, and Lys-267 each bind ATP. An L-methionine-binding site is contributed by Asp-240. Lys-271 lines the L-methionine pocket.

It belongs to the AdoMet synthase family. In terms of assembly, homotetramer; dimer of dimers. It depends on Mg(2+) as a cofactor. Requires K(+) as cofactor.

Its subcellular location is the cytoplasm. It carries out the reaction L-methionine + ATP + H2O = S-adenosyl-L-methionine + phosphate + diphosphate. Its pathway is amino-acid biosynthesis; S-adenosyl-L-methionine biosynthesis; S-adenosyl-L-methionine from L-methionine: step 1/1. Catalyzes the formation of S-adenosylmethionine (AdoMet) from methionine and ATP. The overall synthetic reaction is composed of two sequential steps, AdoMet formation and the subsequent tripolyphosphate hydrolysis which occurs prior to release of AdoMet from the enzyme. In Pseudomonas putida (strain ATCC 700007 / DSM 6899 / JCM 31910 / BCRC 17059 / LMG 24140 / F1), this protein is S-adenosylmethionine synthase.